The sequence spans 412 residues: Propionate kinase (412 aa).

This sequence belongs to the acetokinase family. PduW subfamily.

The protein resides in the cytoplasm. The enzyme catalyses propanoate + ATP = propanoyl phosphate + ADP. Its pathway is polyol metabolism; 1,2-propanediol degradation. In terms of biological role, works with phosphate acetyltransferase (pta) to capture exogenous propionate and regenerate propionyl-CoA during degradation of 1,2-propanediol (1,2-PD). This Yersinia enterocolitica serotype O:8 / biotype 1B (strain NCTC 13174 / 8081) protein is Propionate kinase.